Consider the following 335-residue polypeptide: Dye-decolorizing peroxidase (335 aa).

D149 (proton acceptor) is an active-site residue. H222 contacts heme. The targeting peptide stretch occupies residues 312–335 (LPQAATPTLAAGSLSIGSLKGSPR).

The protein belongs to the DyP-type peroxidase family. Homotetramer, presumably also in the encapsulin nanocompartment. The cofactor is heme b.

The protein resides in the encapsulin nanocompartment. It carries out the reaction 2 a phenolic donor + H2O2 = 2 a phenolic radical donor + 2 H2O. Functionally, cargo of a type 1 encapsulin nanocompartment in situ; this cargo protects against oxidative stress at low pH. When expressed in the cytoplasm (absence of the encapsulin shell gene) it is almost as protective as the intact nanocompartment; its encapsulation has a modest yet significant effect on protection against oxidative stress at low pH. A heme-dependent peroxidase, it probably does not have deferrochelatase activity. Converts guaiacol and H2O2 to tetraguaiacol, also acts on 2,2'-azino-bis(3-ethylbenzothiazoline-6-sulfonic acid) (ABTS). Retains peroxidase activity when encapsulated but has a reduced set of substrates; acts on ABTS but not guaiacol. This Mycobacterium tuberculosis (strain ATCC 25618 / H37Rv) protein is Dye-decolorizing peroxidase.